The following is a 185-amino-acid chain: uncharacterized protein (185 aa).

This sequence belongs to the EUO family.

This is an uncharacterized protein from Chlamydia muridarum (strain MoPn / Nigg).